Consider the following 506-residue polypeptide: Protein NEN3 (506 aa).

The 162-residue stretch at 15–176 (FFDLETAVPT…LDDVRMNLEV (162 aa)) folds into the Exonuclease domain. Mg(2+) contacts are provided by Asp-17 and Glu-19. His-164 (proton donor/acceptor) is an active-site residue. Residue Asp-169 participates in Mg(2+) binding. 2 disordered regions span residues 204 to 240 (KSPR…SSVD) and 289 to 313 (AEEA…KDES). Positions 222 to 238 (SSTSSSSSPKTDPSSSS) are enriched in low complexity. The span at 290–299 (EEAKTVRQQD) shows a compositional bias: basic and acidic residues.

Mg(2+) serves as cofactor.

Probable exonuclease that may be involved in enuclation of sieve elements. In Arabidopsis thaliana (Mouse-ear cress), this protein is Protein NEN3 (NEN3).